The chain runs to 178 residues: Gamma-crystallin M1 (178 aa).

2 consecutive Beta/gamma crystallin 'Greek key' domains span residues 2–40 and 41–86; these read GKIIFYDDRNFQGRSYDCMSDCSDISSYLSRVGSIRVES and GCFM…RMIP. The tract at residues 87 to 91 is connecting peptide; that stretch reads PYRGS. 2 consecutive Beta/gamma crystallin 'Greek key' domains span residues 92-132 and 133-175; these read YRMR…HVMD and GHWL…RRIT.

The protein belongs to the beta/gamma-crystallin family. In terms of assembly, monomer.

Its function is as follows. Crystallins are the dominant structural components of the vertebrate eye lens. This is Gamma-crystallin M1 from Cyprinus carpio (Common carp).